The sequence spans 350 residues: MDFDLEPSLEELIKQDTLKWIFVGGKGGVGKTTTSSSIAVQLALQHPNDEFLLISTDPAHNLSDAFCQKFGKDARKVEGLSNLSCMEIDPEAAMSDLQQQAQQYNNDPNDPLKSIMNDMTGSIPGIDEALSFMEVLKHIKNQKVNESDDSTDKISYRTIIFDTAPTGHTLRFLQLPSTLQKLLGKFQQLSGKLGPMMSMLGGGGQGQQDMFAKLNEVQKNVEEVNEQFTNPDLTTFVCVCISEFLSLYETERMIQELMSYQMDVNSIVVNQLLFADDDENPCKRCVARWKMQKKYLDQMAELYEDYHLVKMPLLGSEIRGVENLKRFSKFLIKPYDPKVDRAIITEMKEQ.

Residue 26 to 33 (KGGVGKTT) coordinates ATP. Residue Asp-57 is part of the active site. Residues Glu-243 and Asn-270 each contribute to the ATP site. 2 residues coordinate Zn(2+): Cys-282 and Cys-285.

This sequence belongs to the arsA ATPase family. Homodimer. Component of the Golgi to ER traffic (GET) complex, which is composed of GET1, GET2 and GET3. Within the complex, GET1 and GET2 form a heterotetramer which is stabilized by phosphatidylinositol binding and which binds to the GET3 homodimer. Interacts with the chloride channel protein GEF1.

Its subcellular location is the cytoplasm. The protein localises to the endoplasmic reticulum. It localises to the golgi apparatus. ATPase required for the post-translational delivery of tail-anchored (TA) proteins to the endoplasmic reticulum. Recognizes and selectively binds the transmembrane domain of TA proteins in the cytosol. This complex then targets to the endoplasmic reticulum by membrane-bound receptors GET1 and GET2, where the tail-anchored protein is released for insertion. This process is regulated by ATP binding and hydrolysis. ATP binding drives the homodimer towards the closed dimer state, facilitating recognition of newly synthesized TA membrane proteins. ATP hydrolysis is required for insertion. Subsequently, the homodimer reverts towards the open dimer state, lowering its affinity for the GET1-GET2 receptor, and returning it to the cytosol to initiate a new round of targeting. Cooperates with the HDEL receptor ERD2 to mediate the ATP-dependent retrieval of resident ER proteins that contain a C-terminal H-D-E-L retention signal from the Golgi to the ER. Involved in low-level resistance to the oxyanions arsenite and arsenate, and in heat tolerance. The protein is ATPase GET3 of Candida dubliniensis (strain CD36 / ATCC MYA-646 / CBS 7987 / NCPF 3949 / NRRL Y-17841) (Yeast).